We begin with the raw amino-acid sequence, 467 residues long: Trigger factor (467 aa).

In terms of domain architecture, PPIase FKBP-type spans 162–243 (GDFVSIDLSA…LNSVKERHLP (82 aa)). Residues 426–435 (EEGNELDLDE) are compositionally biased toward acidic residues. The segment at 426 to 467 (EEGNELDLDELFGTQAGEEQGEQAEGTEATDEQSAKADAKAE) is disordered. A compositionally biased stretch (low complexity) spans 436–452 (LFGTQAGEEQGEQAEGT). The segment covering 458-467 (QSAKADAKAE) has biased composition (basic and acidic residues).

It belongs to the FKBP-type PPIase family. Tig subfamily.

Its subcellular location is the cytoplasm. It carries out the reaction [protein]-peptidylproline (omega=180) = [protein]-peptidylproline (omega=0). Involved in protein export. Acts as a chaperone by maintaining the newly synthesized protein in an open conformation. Functions as a peptidyl-prolyl cis-trans isomerase. This chain is Trigger factor, found in Saccharopolyspora erythraea (strain ATCC 11635 / DSM 40517 / JCM 4748 / NBRC 13426 / NCIMB 8594 / NRRL 2338).